Here is a 100-residue protein sequence, read N- to C-terminus: Urease subunit gamma (100 aa).

This sequence belongs to the urease gamma subunit family. As to quaternary structure, heterotrimer of UreA (gamma), UreB (beta) and UreC (alpha) subunits. Three heterotrimers associate to form the active enzyme.

It is found in the cytoplasm. The enzyme catalyses urea + 2 H2O + H(+) = hydrogencarbonate + 2 NH4(+). Its pathway is nitrogen metabolism; urea degradation; CO(2) and NH(3) from urea (urease route): step 1/1. This Pseudomonas aeruginosa (strain LESB58) protein is Urease subunit gamma.